The primary structure comprises 1255 residues: ATP-binding cassette sub-family B member 5 (1255 aa).

Residues 46-66 (IVLMTLGILASMINGATVPLM) form a helical membrane-spanning segment. In terms of domain architecture, ABC transmembrane type-1 1 spans 51–351 (LGILASMING…SVAPHLETFT (301 aa)). N-linked (GlcNAc...) asparagine glycosylation is found at Asn86 and Asn92. A helical transmembrane segment spans residues 104 to 124 (IIVLTLYYIGIGAAALIFGYV). An N-linked (GlcNAc...) asparagine glycan is attached at Asn189. 2 consecutive transmembrane segments (helical) span residues 290–310 (LSLGAVYFFMNGAYGLAFWYG) and 314–334 (IFGGEPGYTIGTILAVFFSVI). Residues Asn372 and Asn391 are each glycosylated (N-linked (GlcNAc...) asparagine). Positions 387–623 (IEFKNVSFSY…QGLYYSLAMA (237 aa)) constitute an ABC transporter 1 domain. Residue 422-429 (GPSGSGKS) participates in ATP binding. An N-linked (GlcNAc...) asparagine glycan is attached at Asn643. 2 consecutive transmembrane segments (helical) span residues 694 to 714 (VLGTLASALNGSVHPVFSIIF) and 738 to 758 (MMLVVLGIVALVTYLMQGLFY). One can recognise an ABC transmembrane type-1 2 domain in the interval 694 to 981 (VLGTLASALN…TLVWAPEYSK (288 aa)). N-linked (GlcNAc...) asparagine glycosylation occurs at Asn790. 3 helical membrane passes run 814-836 (LGIVTQDVSNMSLSILISFIYGW), 841-863 (LILSFAPVLAVTGMIQTAAMAGF), and 955-975 (MFIVFTAIAYGAMAIGETLVW). The ABC transporter 2 domain occupies 1016-1254 (LEFREVSFVY…GDTYFKLVAA (239 aa)). Residue Asn1036 is glycosylated (N-linked (GlcNAc...) asparagine). 1051–1058 (GSSGCGKS) serves as a coordination point for ATP. N-linked (GlcNAc...) asparagine glycosylation is found at Asn1105, Asn1189, and Asn1229.

It belongs to the ABC transporter superfamily. ABCB family. Multidrug resistance exporter (TC 3.A.1.201) subfamily. As to expression, in developing eye, expressed in basal limbal epithelium but not in central cornea. Acts as a marker of limbal stem cells.

Its subcellular location is the cell membrane. It catalyses the reaction daunorubicin(in) + ATP + H2O = daunorubicin(out) + ADP + phosphate + H(+). Its function is as follows. Energy-dependent efflux transporter responsible for decreased drug accumulation in multidrug-resistant cells. Specifically present in limbal stem cells, where it plays a key role in corneal development and repair. The chain is ATP-binding cassette sub-family B member 5 from Mus musculus (Mouse).